The following is a 42-amino-acid chain: Iota-conotoxin-like R11.15 (42 aa).

4 cysteine pairs are disulfide-bonded: cysteine 5–cysteine 19, cysteine 12–cysteine 22, cysteine 18–cysteine 27, and cysteine 21–cysteine 36.

It belongs to the conotoxin I1 superfamily. In terms of tissue distribution, expressed by the venom duct.

It is found in the secreted. Functionally, iota-conotoxins bind to voltage-gated sodium channels (Nav) and act as agonists by shifting the voltage-dependence of activation to more hyperpolarized levels. Produces general excitatory symptoms. The chain is Iota-conotoxin-like R11.15 from Conus radiatus (Rayed cone).